A 238-amino-acid chain; its full sequence is Uridylate kinase (238 aa).

Position 12–15 (12–15) interacts with ATP; sequence KLSG. A UMP-binding site is contributed by glycine 54. Residues glycine 55 and arginine 59 each contribute to the ATP site. Residues aspartate 74 and 135-142 each bind UMP; that span reads TGNPFFTT. ATP-binding residues include threonine 162, tyrosine 168, and aspartate 171.

This sequence belongs to the UMP kinase family. Homohexamer.

The protein localises to the cytoplasm. The catalysed reaction is UMP + ATP = UDP + ADP. Its pathway is pyrimidine metabolism; CTP biosynthesis via de novo pathway; UDP from UMP (UMPK route): step 1/1. With respect to regulation, inhibited by UTP. Catalyzes the reversible phosphorylation of UMP to UDP. The polypeptide is Uridylate kinase (Bordetella avium (strain 197N)).